Consider the following 246-residue polypeptide: Fasciclin-like arabinogalactan protein 11 (246 aa).

An N-terminal signal peptide occupies residues 1 to 24 (MATSRTFIFSNLFIFFLVIATTYG). The 146-residue stretch at 34–179 (PTNITAILEK…LAVYQVDQVL (146 aa)) folds into the FAS1 domain. N-linked (GlcNAc...) asparagine glycans are attached at residues Asn36, Asn68, Asn141, and Asn150. Residues 193–222 (PAPEKGGSVSKGSASGGDDGGDSTDSSDAE) form a disordered region. Ser219 carries the GPI-anchor amidated serine lipid modification. The propeptide at 220–246 (DAERTGFGFGIRITTVAAIAASSSLWI) is removed in mature form.

This sequence belongs to the fasciclin-like AGP family. Expressed in the sclerenchyma cells of inflorescence stems and siliques.

It localises to the cell membrane. Functionally, may be a cell surface adhesion protein. In Arabidopsis thaliana (Mouse-ear cress), this protein is Fasciclin-like arabinogalactan protein 11 (FLA11).